The chain runs to 386 residues: MTTISDLPYDLLPEILSRLPTKSIPKLKTTCKKWYALFKDPKFVEKKLGKAARETVFLMNHEVNSISVDIHGIPKGYSVSMDFTGTLTIPEGSDLEIFRIHHCNGLFLCATMNCRLVVWNPCTGQITWIIPRTRYDSDDIYALGCGDDKSSSLHSYKILRCCDDNQKKPVSEIYDFSSSSWRVLDGVTANCFIECNGVALKESAYWYASDKRETPKGKFILRFDFATERFARLCLPLNFQRDRDNKSVVVSVVGEEKLALLQQFDHRVHGLKYSKIKIWVTDTKIGEGKDLSWSNILVEELADDNLPSVTSFLLDEEKKVAVCSDAVCSDTDTEDEDRRRIYIVGEGVDEFVYDEVSTETSHNWPFLVSYVPNLVHIEKDAPIVEV.

One can recognise an F-box domain in the interval 1-48 (MTTISDLPYDLLPEILSRLPTKSIPKLKTTCKKWYALFKDPKFVEKKL). Kelch repeat units lie at residues 155–203 (SYKI…LKES) and 340–386 (RIYI…IVEV).

The protein is Putative F-box/kelch-repeat protein At3g17280 of Arabidopsis thaliana (Mouse-ear cress).